Consider the following 84-residue polypeptide: Translational regulator CsrA (84 aa).

The protein belongs to the CsrA/RsmA family. In terms of assembly, homodimer; the beta-strands of each monomer intercalate to form a hydrophobic core, while the alpha-helices form wings that extend away from the core.

Its subcellular location is the cytoplasm. Functionally, a translational regulator that binds mRNA to regulate translation initiation and/or mRNA stability. Usually binds in the 5'-UTR at or near the Shine-Dalgarno sequence preventing ribosome-binding, thus repressing translation. Its main target seems to be the major flagellin gene, while its function is anatagonized by FliW. The chain is Translational regulator CsrA from Leptospira interrogans serogroup Icterohaemorrhagiae serovar Lai (strain 56601).